The following is a 213-amino-acid chain: MAKIHFRTAQFLISAPSIRQCPTEEGTEVAFAGRSNAGKSSAINTLTGNGKLARTSKTPGRTQLINFFNFPAAPDQRIVDLPGYGYAKVPMAVKKKWQADLSEYLQQRDALRGLVIVMDIRHPLQDFDTMMINWAVEGEMPVHLLLTKADKLKPGAAKSTLLAVQKHMRDAQVDDLVSAQMFSALKKQGINQLEDVLNGWLLPQHDEPEAAQE.

In terms of domain architecture, EngB-type G spans 25 to 203 (EGTEVAFAGR…EDVLNGWLLP (179 aa)). GTP is bound by residues 33-40 (GRSNAGKS), 60-64 (GRTQL), 80-83 (DLPG), 147-150 (TKAD), and 179-184 (AQMFSA). 2 residues coordinate Mg(2+): serine 40 and threonine 62.

Belongs to the TRAFAC class TrmE-Era-EngA-EngB-Septin-like GTPase superfamily. EngB GTPase family. Requires Mg(2+) as cofactor.

In terms of biological role, necessary for normal cell division and for the maintenance of normal septation. The chain is Probable GTP-binding protein EngB from Saccharophagus degradans (strain 2-40 / ATCC 43961 / DSM 17024).